The following is a 525-amino-acid chain: MNDLKKSPLLILDFGSQYTQLIARRVREMGVYCEIYPYNINHEQFKKLNPCGVILSGGPSTVTHDANPRAPQWLFESDLPLLGICYGMQTMAVQLGGQVHSSTLREFGYAELRLHGHSQLLSNIEDRTAMDGSALLDVWMSHGDKVTELPPGFKVICETRNAPIAGMADESRQMYGLQFHPEVTHTLQGLRILQRFVVDICKASTDWTPEHIIDEAINKIREQVGTEKVLLGLSGGVDSSVVAALLHRAIGEQLVCVFVDTGLLRLNEAEQVLSMFGRHMGIRIIAVNAEDKFLTALKGVTCPEEKRKIIGRTFIEVFDEEAQKLTDIKWLAQGTIYPDVIESAATSTNDAAVVIKSHHNVGGLPDTLNLKLLEPIRELFKDEVRHVGLELGLPHDMVYRHPFPGPGLGVRILAEVKKEYADILRKADAIFIEELHNAQLYHKISQAFAVFLPVKSVGVMGDGRRYDYVICLRAVETVDFMTAHWSQLPWDFLGKVSNRIINEVEGVSRVTYDISGKPPATIEWE.

One can recognise a Glutamine amidotransferase type-1 domain in the interval 8–206; sequence PLLILDFGSQ…VVDICKASTD (199 aa). Cys-85 (nucleophile) is an active-site residue. Residues His-180 and Glu-182 contribute to the active site. The GMPS ATP-PPase domain occupies 207–400; sequence WTPEHIIDEA…LGLPHDMVYR (194 aa). Residue 234-240 participates in ATP binding; that stretch reads SGGVDSS.

As to quaternary structure, homodimer.

The enzyme catalyses XMP + L-glutamine + ATP + H2O = GMP + L-glutamate + AMP + diphosphate + 2 H(+). Its pathway is purine metabolism; GMP biosynthesis; GMP from XMP (L-Gln route): step 1/1. Catalyzes the synthesis of GMP from XMP. The sequence is that of GMP synthase [glutamine-hydrolyzing] from Legionella pneumophila (strain Paris).